A 451-amino-acid chain; its full sequence is MRTKLSTCNVWFPLLVLLVWNPARLVLANIQEDEAKNNITIFTRILDRLLDGYDNRLRPGLGDSITEVFTNIYVTSFGPVSDTDMEYTIDVFFRQKWKDERLKFKGPMNILRLNNSMASKIWTPDTFFHNGKKSVAHNMTMPNKLLRIQDDGTLLYTMRLTVQAECPMHLEDFPMDAHSCPLKFGSYAYTTSEVTYIWTYNPSDSVQVAPDGSRLNQYDLLGQSIGKETIKSSTGEYTVMTAHFHLKRKIGYFVIQTYLPCIMTVILSQVSFWLNRESVPARTVFGVTTVLTMTTLSISARNSLPKVAYATAMDWFIAVCYAFVFSALIEFATVNYFTKRGWAWDGKSVVNDKKKEKGSVMIQNNAYAVAVANYAPNLSKDPVLSTISKSATTPEPNKKPENKPAEAKKTFNSVSKIDRMSRIVFPVLFGTFNLVYWATYLNREPVLGVSP.

The first 28 residues, 1–28 (MRTKLSTCNVWFPLLVLLVWNPARLVLA), serve as a signal peptide directing secretion. The Extracellular segment spans residues 29–249 (NIQEDEAKNN…MTAHFHLKRK (221 aa)). Asparagine 38 carries an N-linked (GlcNAc...) asparagine glycan. Arginine 94 lines the 4-aminobutanoate pocket. Asparagine 114 and asparagine 138 each carry an N-linked (GlcNAc...) asparagine glycan. Residue threonine 157 participates in 4-aminobutanoate binding. The cysteines at positions 166 and 180 are disulfide-linked. The next 3 membrane-spanning stretches (helical) occupy residues 250–270 (IGYF…LSQV), 281–300 (ARTV…SISA), and 312–332 (AMDW…IEFA). Residues 333–420 (TVNYFTKRGW…FNSVSKIDRM (88 aa)) lie on the Cytoplasmic side of the membrane. A disordered region spans residues 389 to 408 (KSATTPEPNKKPENKPAEAK). The span at 396–408 (PNKKPENKPAEAK) shows a compositional bias: basic and acidic residues. The helical transmembrane segment at 421–441 (SRIVFPVLFGTFNLVYWATYL) threads the bilayer. Residues 442–451 (NREPVLGVSP) are Extracellular-facing.

This sequence belongs to the ligand-gated ion channel (TC 1.A.9) family. Gamma-aminobutyric acid receptor (TC 1.A.9.5) subfamily. GABRA2 sub-subfamily. Heteropentamer, formed by a combination of alpha (GABRA1-6), beta (GABRB1-3), gamma (GABRG1-3), delta (GABRD), epsilon (GABRE), rho (GABRR1-3), pi (GABRP) and theta (GABRQ) subunits, each subunit exhibiting distinct physiological and pharmacological properties. Binds UBQLN1. Interacts with KIF21B. Interacts with LHFPL4. Interacts with SHISA7; interaction leads to the regulation of GABA(A) receptor trafficking, channel deactivation kinetics and pharmacology. Glycosylated. Expressed in brain (at protein level).

The protein localises to the postsynaptic cell membrane. It localises to the cell membrane. It is found in the cytoplasmic vesicle membrane. The protein resides in the cell projection. Its subcellular location is the dendrite. It carries out the reaction chloride(in) = chloride(out). With respect to regulation, activated by pentobarbital. Inhibited by the antagonist bicuculline. Its function is as follows. Alpha subunit of the heteropentameric ligand-gated chloride channel gated by gamma-aminobutyric acid (GABA), a major inhibitory neurotransmitter in the brain. GABA-gated chloride channels, also named GABA(A) receptors (GABAAR), consist of five subunits arranged around a central pore and contain GABA active binding site(s) located at the alpha and beta subunit interface(s). When activated by GABA, GABAARs selectively allow the flow of chloride anions across the cell membrane down their electrochemical gradient. Chloride influx into the postsynaptic neuron following GABAAR opening decreases the neuron ability to generate a new action potential, thereby reducing nerve transmission. The alpha-2 subunit exhibits synaptogenic activity together with beta-2 and very little to no activity together with beta-3, the gamma-2 subunit being necessary but not sufficient to induce rapid synaptic contacts formation. This Rattus norvegicus (Rat) protein is Gamma-aminobutyric acid receptor subunit alpha-2.